A 946-amino-acid chain; its full sequence is MQNNRSLSKSSFFVGALILGKTTILLNATPLSDYFDNQANQLTTLFPLIDTLTNMTPYSHRATLFGVRDDTNQDIVLDHQNSIESWFENFSQDGGALSCKSLAITNTKNQILFLNSFAIKRAGAMYVNGNFDLSENHGSIIFSGNLSFPNASNFADTCTGGAVLCSKNVTISKNQGTAYFINNKAKSSGGAIQAAIINIKDNTGPCLFFNNAAGGTAGGALFANACRIENNSQPIYFLNNQSGLGGAIRVHQECILTKNTGSVIFNNNFAMEADISANHSSGGAIYCISCSIKDNPGIAAFDNNTAARDGGAICTQSLTIQDSGPVYFTNNQGTWGGAIMLRQDGACTLFADQGDIIFYNNRHFKDTFSNHVSVNCTRNVSLTVGASQGHSATFYDPILQRYTIQNSIQKFNPNPEHLGTILFSSAYIPDTSTSRDDFISHFRNHIGLYNGTLALEDRAEWKVYKFDQFGGTLRLGSRAVFSTTDEEQSSSSVGSVININNLAINLPSILGNRVAPKLWIRPTGSSAPYSEDNNPIINLSGPLSLLDDENLDPYDTADLAQPIAEVPLLYLLDVTAKHINTDNFYPEGLNTTQHYGYQGVWSPYWIETITTSDTSSEDTVNTLHRQLYGDWTPTGYKVNPENKGDIALSAFWQSFHNLFATLRYQTQQGQIAPTASGEATRLFVHQNSNNDAKGFHMEATGYSLGTTSNTASNHSFGVNFSQLFSNLYESHSDNSVASHTTTVALQINNPWLQERFSTSASLAYSYSNHHIKASGYSGKIQTEGKCYSTTLGAALSCSLSLQWRSRPLHFTPFIQAIAVRSNQTAFQESGDKARKFSVHKPLYNLTVPLGIQSAWESKFRLPTYWNIELAYQPVLYQQNPEVNVSLESSGSSWLLSGTTLARNAIAFKGRNQIFIFPKLSVFLDYQGSVSSSTTTHYLHAGTTFKF.

The signal sequence occupies residues 1–16; sequence MQNNRSLSKSSFFVGA. Residues 668-946 form the Autotransporter domain; the sequence is QGQIAPTASG…YLHAGTTFKF (279 aa).

The protein belongs to the PMP outer membrane protein family.

Its subcellular location is the secreted. The protein localises to the cell wall. It localises to the cell outer membrane. The sequence is that of Probable outer membrane protein pmp18 (pmp18) from Chlamydia pneumoniae (Chlamydophila pneumoniae).